Reading from the N-terminus, the 780-residue chain is MTHEEHHAAKTLGIGKAIAVLTSGGDAQGMNAAVRAVVRVGIFTGARVFFVHEGYQGLVDGGEHIREATWESVSMMLQLGGTVIGSARCKDFREREGRLRAAHNLVKRGITNLCVIGGDGSLTGADTFRSEWSDLLNDLQKDGKITAEEATKSSYLNIVGLVGSIDNDFCGTDMTIGTDSALHRIVEIVDAITTTAQSHQRTFVLEVMGRHCGYLALVTSLSCGADWVFIPECPPDDDWEEHLCRRLSETRTRGSRLNIIIVAEGAIDKNGKPITSEDIKNLVVKRLGYDTRVTVLGHVQRGGTPSAFDRILGSRMGVEAVMALLEGTPDTPACVVSLSGNQAVRLPLMECVQVTKDVTKAMDEKRFDEAIKLRGRSFMNNWEVYKLLAHVRPPVSKGGLHTVAVMNVGAPAAGMNAAVRSTVRIGLIQGNRVLVVHDGFEGLAKGQIEEAGWSYVGGWTGQGGSKLGTKRTLPKKNLEQISANITKFNIQGLVIIGGFEAYTGGLELMEGRKQFDELCIPFVVIPATVSNNVPGSDFSIGADTALNTICTTCDRIKQSAAGTKRRVFIIETMGGYCGYLATMAGLAAGADAAYIFEEPFTIRDLQVNVEHLVQKMKTTVKRGLVLRNEKCNENYTTDFIFNLYSEEGKGIFDSRKNVLGHMQQGGSPTPFDRNFATKMGAKAMNWMSGKIKESYRNGRIFANTPDSGCVLGMRKRALVFQPVTELKDQTDFEHRIPKEQWWLKLRPILKILAKYEIDLDTSDHAHLEHISRKRSGEAAV.

Position 2 is an N-acetylthreonine (threonine 2). The N-terminal catalytic PFK domain 1 stretch occupies residues 2–390; that stretch reads THEEHHAAKT…NWEVYKLLAH (389 aa). ATP contacts are provided by residues glycine 25, 88-89, and 118-121; these read RC and GDGS. Aspartate 119 lines the Mg(2+) pocket. Residue serine 133 is modified to Phosphoserine. Residues 164–166, arginine 201, 208–210, glutamate 264, arginine 292, and 298–301 each bind substrate; these read SID, MGR, and HVQR. Aspartate 166 acts as the Proton acceptor in catalysis. The residue at position 377 (serine 377) is a Phosphoserine. Residues 391–401 are interdomain linker; that stretch reads VRPPVSKGGLH. A C-terminal regulatory PFK domain 2 region spans residues 402-780; that stretch reads TVAVMNVGAP…SRKRSGEAAV (379 aa). Beta-D-fructose 2,6-bisphosphate contacts are provided by residues arginine 471 and 528–532; that span reads TVSNN. O-linked (GlcNAc) serine glycosylation is present at serine 530. Lysine 557 is modified (N6-(2-hydroxyisobutyryl)lysine). Beta-D-fructose 2,6-bisphosphate contacts are provided by residues arginine 566, 573-575, glutamate 629, arginine 655, and 661-664; these read MGG and HMQQ. Serine 667 carries the post-translational modification Phosphoserine. Residue arginine 735 coordinates beta-D-fructose 2,6-bisphosphate. A Phosphoserine modification is found at serine 775.

Belongs to the phosphofructokinase type A (PFKA) family. ATP-dependent PFK group I subfamily. Eukaryotic two domain clade 'E' sub-subfamily. In terms of assembly, homo- and heterotetramers. Phosphofructokinase (PFK) enzyme functions as a tetramer composed of different combinations of 3 types of subunits, called PFKM (M), PFKL (L) and PFKP (P). The composition of the PFK tetramer differs according to the tissue type it is present in. The kinetic and regulatory properties of the tetrameric enzyme are dependent on the subunit composition, hence can vary across tissues. Isoform 2 and isoform 3 interact (via N-terminal testis-specific region) with GSTM5. Isoform 2 and isoform 3 interact (via C-terminus) with HK1 (via N-terminal spermatogenic cell-specific region). Mg(2+) serves as cofactor. Post-translationally, glcNAcylation decreases enzyme activity. As to expression, isoform 1 is expressed in skeletal muscle (at protein level). Isoform 2 and isoform 3 are testis-specific and are detected in quiescent sperm (at protein level). They are first detected in the cytoplasm of round spermatids and subsequently in the flagellum of elongated spermatids extending into the seminiferous tubule lumen (at protein level). Isoform 2 is expressed at higher level than isoform 3 in testis.

The protein localises to the cytoplasm. It localises to the cell projection. It is found in the cilium. The protein resides in the flagellum. It catalyses the reaction beta-D-fructose 6-phosphate + ATP = beta-D-fructose 1,6-bisphosphate + ADP + H(+). It participates in carbohydrate degradation; glycolysis; D-glyceraldehyde 3-phosphate and glycerone phosphate from D-glucose: step 3/4. Allosterically activated by ADP, AMP, or fructose 2,6-bisphosphate, and allosterically inhibited by ATP or citrate. Its function is as follows. Catalyzes the phosphorylation of D-fructose 6-phosphate to fructose 1,6-bisphosphate by ATP, the first committing step of glycolysis. This chain is ATP-dependent 6-phosphofructokinase, muscle type (Pfkm), found in Mus musculus (Mouse).